The chain runs to 570 residues: CRISPR-associated protein Cas8a1/Csx13 (570 aa).

Disordered regions lie at residues 1–23 (MACMAPRGPAAIPHPSSERAGLR) and 551–570 (GGEAAELEDADEAAGASEQS).

Belongs to the CRISPR-associated protein Cas8a1/Csx13 family. Myxan subtype subfamily.

Its function is as follows. CRISPR (clustered regularly interspaced short palindromic repeat) is an adaptive immune system that provides protection against mobile genetic elements (viruses, transposable elements and conjugative plasmids). CRISPR clusters contain spacers, sequences complementary to antecedent mobile elements, and target invading nucleic acids. CRISPR clusters are transcribed and processed into CRISPR RNA (crRNA). In terms of biological role, functions in an unknown fashion to stimulate transcription of fruA independently of the intracellular A- and E-developmental signals. This is CRISPR-associated protein Cas8a1/Csx13 (devT) from Myxococcus xanthus (strain DK1622).